Reading from the N-terminus, the 284-residue chain is Large ribosomal subunit protein uL2 (284 aa).

Residues arginine 232–lysine 284 form a disordered region. A compositionally biased stretch (basic and acidic residues) spans aspartate 240–histidine 250. The segment covering lysine 264–lysine 284 has biased composition (basic residues).

The protein belongs to the universal ribosomal protein uL2 family. Part of the 50S ribosomal subunit. Forms a bridge to the 30S subunit in the 70S ribosome.

Its function is as follows. One of the primary rRNA binding proteins. Required for association of the 30S and 50S subunits to form the 70S ribosome, for tRNA binding and peptide bond formation. It has been suggested to have peptidyltransferase activity; this is somewhat controversial. Makes several contacts with the 16S rRNA in the 70S ribosome. In Chlamydia abortus (strain DSM 27085 / S26/3) (Chlamydophila abortus), this protein is Large ribosomal subunit protein uL2.